We begin with the raw amino-acid sequence, 67 residues long: Large ribosomal subunit protein uL29 (67 aa).

This sequence belongs to the universal ribosomal protein uL29 family.

The sequence is that of Large ribosomal subunit protein uL29 from Methanosarcina acetivorans (strain ATCC 35395 / DSM 2834 / JCM 12185 / C2A).